Reading from the N-terminus, the 2552-residue chain is MNHITSKRLDIRATLIFGIFYGILITFSKLTSYLFLIRHWISQDDEGTGKARALSYGFTVGHLLGYLLIYYLPFYKALSNFYLKIILALGLMLYQFFWTNHHLDIFLPKSFSTPQRDQTLAFVYGLSYRLLNYTFFPNSIFSRMIVGYLVQCQFKILFLYTTFFVWMIGHLICIKWVQFLTLWLQKNYSAFLILTHQLYLQDKIKKIRSRTIPIAKIFEYKPDPVMKPGIYRESQTIDEMIQILATILFIVALYLLGKSPIPFVPHSPSAPNAVELARMSRLEEEAKVQREIEDRFYPLEDFDEEQKKDEKSADEEKKRAVEEENQEILDLEEEENQEILDLEEEENQEILDMDEEKGFENTLYTFFSDCFFESFSFYAFLFNRLKFYSGYLFNRLKFCYGYLFDLFSSSSRFLNRIEPLFSPFLVVVKPFYLYFFNFFSVYIPHLKFLKWFLFNHNFVFSAIFRGFSHFFFNPRRWVIPYRYIKTSFYEYSVKKGGFSQFCFYKCQSDGKERTSFTYPLSLITFYKMIEGKLSLFRKKKRLPDRDRLYTLWVLRNAKKKDSLNKELIKRVQKLKSGSPLRDVLDIRRKLFQFKYTPKVLRSISETLFDQMHPSGGKKRENDPVWDGPSRGAFWYNHKLTKTAAEQRVDEEEHLQTMWLFFKDLRPLNQKEQYLILERQKLERESQEKQKLRRQCFEKSLLGKTLRILQKMAPYFRAPQYIPSNSMSRAFKLYRVSAYLTLDWQETTRILRRVHKLRKRGMIIRVNEERESWIRSHKERYLKLKEIRKKRVQLEKEKRRPKKILLRLDKKTKKGTLKKKQKEAFPLNTILTRILVLNSHFRTSSKRKRDSKDRRNLYSYPNPLLEKINKIRRNRNTVYHIMNTYYEGRSGFTHEDIPKMRKKYQKYRQFQLKLRTIMKEVPRWGYNIDDEKIDYSDYNIRNDDVVAEDVYLRTRKAKFRVFRTKVWKYYERHDKRELKQWYFYRYAKITHFRRNMVKGADRTQRRKVTICGWYEHRVQSPLFLPKRRKTLILIMLTLDVFELMKKCYRFLRQDSRFQVRVKRISERINRIWKKLWNLPDSQKSAIEAAIEAENELQGLRESEEDKKKRQERGDALEEWQERREAHEIRAICIAETWELLQSGHAVRSLILLIQSFLRKNVIFPFLIIAKNMARILFFQSPELFQDFADLKKETHTLCDFGGIPLDESQDPIGWFTDGCQIRIHFPFEWKPWRETEQSKESSVAEDLYLTVFGRITNIPFGTARKPYPFFKTVFEELKKKKASQELKNLLTSGIRKLQKKGFLKFKKKGFLRKRLLAFQKKSFQSKLLKGVKVKKRTNLKKGPQSKLTKKKKERKVDKTRAIINEIERVLKEKKKRLFIIQTSISSTKTSSHSKTSEALRRLSKILKRRKARFIRKSTIFRKWIIEWIYVKILFDLKNRFDLKKRFLDEMNKKKSCLKMVAQFFFQFKKKRKNKKIDKAIKGINKKKRKKNRFISTIKKHSFNMRNSQISKSQKTLVFDLSSLSQAYVFYKLSQTEKSSFRVSKFQNLRNCRVGMNRWKEWLRGHFDYYLLSDIRWSRLEAQKWRNKMNQCRTAENHNFKKGDSYEIDSLPINPQKLKFKKHLRYDLLAYSFLNAEYKKDPYVIAPSLVSNNQTAISHLYNIHKESLVNMLTSNYKHLRDSKEKHPLLDMHMDVNRTALRRRMNYNQILFHVEDKKKGSKVVDKVAIDSWVTGQNRVLPAGSLTEDRVGFTEGAMVFLESVLKQLRERRRPYPESLDESFRPEWLKWPLEHLIGYIHKICDMHLYFFSVYALYWPEFYDRHRLAKLGCVFRYEKCYDKRRTPIWKKQKSMAKRKKDLAARKKKMSGKAQSIKIAQREFDLSLILEPEEFEKIEKKNFFDWMGLNNENELEELMERNNDEKKSSFLESSFFLFPEFIQLYNLLNLYAKAEWTTPIHSFLQNGKIRSRSSYADLKVEFDSFNWYMYDKKEWPAKGRPLWDSNRARRRRRHRRALLNLGRKDPRKETTLDIMIDPTERERAYAETISEMKAEEQKKIDEEYEEKKEKRKKEQEEQGKAFDETSYRKNHKKRFARVSTLKPIKYSRFRKTALKDLKKSNYFRYQVHYSLRYLIADFLTNVTRTSQVTNKATNPKLLLVFIKDLIEMSQFGIMGTTQNQLPTLEDILNMGYLVLNPIRTFKRLRWEHVTYQILAISLLHKNQFQKLAYTPGPDNKRDPCLEIGVNKVKQTTYKVRKGRKVVESLSVRRLRVKRWWGLRVSYGKFGCPRSFWTKLVRYLVHPFAIPLKAKARGKKKQSPWSYERVFGLFHWKPEVHPKKKRKRTPWSYERVFGQFHADQMRFFYKIGVCGKFKRECTAILLSLITDPKRANDRIKKLILLDEGVPDTLVEKGLLVPENLLSPRRRRQLRIVNELNKKKKKEKRIPQHKLTPYNKLLKETGRMDLNLLLRELDEREKRQREERLNLVQKKEREQEELRKKEEESKELNRIKKKLMRLRFFLWPNYRLEDLACMNRYWFDTTNGSRFSMLRIRVYPRLKTR.

6 helical membrane-spanning segments follow: residues 15–35 (LIFGIFYGILITFSKLTSYLF), 54–74 (LSYGFTVGHLLGYLLIYYLPF), 78–98 (LSNFYLKIILALGLMLYQFFW), 119–136 (TLAFVYGLSYRLLNYTFF), 154–174 (FKILFLYTTFFVWMIGHLICI), and 243–263 (ILATILFIVALYLLGKSPIPF). The disordered stretch occupies residues 304–325 (EEQKKDEKSADEEKKRAVEEEN). A compositionally biased stretch (basic and acidic residues) spans 305–322 (EQKKDEKSADEEKKRAVE). The next 3 helical transmembrane spans lie at 362–382 (TLYTFFSDCFFESFSFYAFLF), 423–443 (PFLVVVKPFYLYFFNFFSVYI), and 452–472 (FLFNHNFVFSAIFRGFSHFFF). The disordered stretch occupies residues 2045–2077 (MKAEEQKKIDEEYEEKKEKRKKEQEEQGKAFDE). Residues 2416–2511 (RRRRQLRIVN…IKKKLMRLRF (96 aa)) are a coiled coil.

The protein belongs to the TIC214 family. As to quaternary structure, part of the Tic complex.

It is found in the plastid. It localises to the chloroplast inner membrane. Involved in protein precursor import into chloroplasts. May be part of an intermediate translocation complex acting as a protein-conducting channel at the inner envelope. This chain is Protein TIC 214, found in Pelargonium hortorum (Common geranium).